Here is a 122-residue protein sequence, read N- to C-terminus: Large ribosomal subunit protein uL14 (122 aa).

This sequence belongs to the universal ribosomal protein uL14 family. In terms of assembly, part of the 50S ribosomal subunit. Forms a cluster with proteins L3 and L19. In the 70S ribosome, L14 and L19 interact and together make contacts with the 16S rRNA in bridges B5 and B8.

In terms of biological role, binds to 23S rRNA. Forms part of two intersubunit bridges in the 70S ribosome. In Nitrosococcus oceani (strain ATCC 19707 / BCRC 17464 / JCM 30415 / NCIMB 11848 / C-107), this protein is Large ribosomal subunit protein uL14.